The chain runs to 222 residues: Cyclin-U2-1 (222 aa).

Belongs to the cyclin family. Cyclin U/P subfamily. As to quaternary structure, interacts with CDKA-1. In terms of tissue distribution, expressed in roots, stems and flowers. Expressed in the shoot apex, leaf primordia and young leaves.

The chain is Cyclin-U2-1 (CYCU2-1) from Arabidopsis thaliana (Mouse-ear cress).